Here is a 493-residue protein sequence, read N- to C-terminus: Alpha-amylase-related protein (493 aa).

Residues 1 to 19 (MFKFALTLTLCLAGSLSLA) form the signal peptide. Position 20 is a pyrrolidone carboxylic acid (Q20). C47 and C103 are oxidised to a cystine. N117, Q168, and D177 together coordinate Ca(2+). Cysteines 156 and 170 form a disulfide. R205 contacts chloride. D207 (nucleophile) is an active-site residue. Residue H211 coordinates Ca(2+). E244 (proton donor) is an active-site residue. Chloride-binding residues include N307 and R342. Disulfide bonds link C375-C381, C417-C440, and C447-C459.

It belongs to the glycosyl hydrolase 13 family. In terms of assembly, monomer. Ca(2+) serves as cofactor. Requires chloride as cofactor. As to expression, midgut and fat body.

The protein resides in the secreted. It catalyses the reaction Endohydrolysis of (1-&gt;4)-alpha-D-glucosidic linkages in polysaccharides containing three or more (1-&gt;4)-alpha-linked D-glucose units.. The polypeptide is Alpha-amylase-related protein (Amyrel) (Drosophila melanogaster (Fruit fly)).